Here is a 2454-residue protein sequence, read N- to C-terminus: Probable serine/threonine-protein kinase DDB_G0277071 (2454 aa).

The span at 31–51 (TSSLTTTTTTTTTTTTTTSTT) shows a compositional bias: low complexity. Disordered regions lie at residues 31-57 (TSSL…HESN), 206-265 (QQQL…QKQN), 340-612 (PRPP…LKIE), 963-1051 (NNIN…NENE), 1201-1330 (SSDD…SNPL), and 1342-1528 (ISKG…SNNT). Residues 259 to 307 (KQQQKQNSQQQQQQQQQQQQQQQQQQQQQQQQQQQQQQQQQQQKLNIHE) are a coiled coil. Low complexity-rich tracts occupy residues 346–399 (QQHQ…NITP) and 406–428 (PSSV…KPTS). Positions 429 to 444 (IGQIQSLHYHNPSLYQ) are enriched in polar residues. 2 stretches are compositionally biased toward low complexity: residues 450–461 (NRNRGNNNNNNN) and 475–536 (SSTV…NTPN). Residues 553-568 (GGIGGGGGGGSGGGGI) are compositionally biased toward gly residues. 5 stretches are compositionally biased toward low complexity: residues 963–1048 (NNIN…TTTN), 1201–1248 (SSDD…TGGP), 1275–1284 (NSSNNNNTSS), 1299–1324 (SGSS…PTTG), and 1346–1403 (SPAS…SVST). Over residues 1417-1441 (LNLSSVSKTGQASTSTPNLLNLKNI) the composition is skewed to polar residues. The span at 1442–1478 (PTTTNNSNSTTTTTTTTPTGKPQFSLNLSSLSKSSSS) shows a compositional bias: low complexity. Residues 1479–1491 (TETVPPSQPNQPI) are compositionally biased toward polar residues. The span at 1509–1528 (STTTTTTTTTPPPINNSNNT) shows a compositional bias: low complexity. Positions 1730–2034 (FKDLKRVAKG…TKFIAIKPTI (305 aa)) constitute a Protein kinase domain. ATP is bound by residues 1736 to 1744 (VAKGAYGTV) and lysine 1760. The active-site Proton acceptor is aspartate 1858. One can recognise a Tyrosine-protein phosphatase domain in the interval 2130 to 2271 (RPSKVASFMY…LCRWGKQRRN (142 aa)). Residues 2379–2404 (NINNNNNNNSNNSKSKQQQQQQQNQN) form a disordered region.

The protein belongs to the protein kinase superfamily. Ser/Thr protein kinase family.

It catalyses the reaction L-seryl-[protein] + ATP = O-phospho-L-seryl-[protein] + ADP + H(+). The enzyme catalyses L-threonyl-[protein] + ATP = O-phospho-L-threonyl-[protein] + ADP + H(+). The polypeptide is Probable serine/threonine-protein kinase DDB_G0277071 (Dictyostelium discoideum (Social amoeba)).